A 345-amino-acid polypeptide reads, in one-letter code: Sorting nexin-15 (345 aa).

The PX domain occupies 1-130 (MSRQAKDDFL…EFFRGGEVTR (130 aa)). Arginine 105 bears the Omega-N-methylarginine mark. The segment at 133–163 (EVSGDLHILPPPLIPTPPPDEPRVQPHETWL) is disordered. A compositionally biased stretch (pro residues) spans 141–151 (LPPPLIPTPPP). Serine 208 and serine 234 each carry phosphoserine. Residues 226 to 274 (SKEEGAGPSPTHIGELAALEAGSGRPDQEPWEPGGQAEEDDEEGEPAPA) form a disordered region. An MIT domain is found at 272 to 345 (APAYLSQATE…AEEILHLHLS (74 aa)).

Belongs to the sorting nexin family.

Functionally, may be involved in several stages of intracellular trafficking. Overexpression of SNX15 disrupts the normal trafficking of proteins from the plasma membrane to recycling endosomes or the TGN. In Bos taurus (Bovine), this protein is Sorting nexin-15 (SNX15).